We begin with the raw amino-acid sequence, 182 residues long: Putative lipoprotein LpqE (182 aa).

A signal peptide spans 1–29 (MNRCNIRLRLAGMTTWVASIALLAAALSG). Cys30 is lipidated: N-palmitoyl cysteine. The S-diacylglycerol cysteine moiety is linked to residue Cys30.

Its subcellular location is the cell membrane. The protein is Putative lipoprotein LpqE (lpqE) of Mycobacterium bovis (strain ATCC BAA-935 / AF2122/97).